An 871-amino-acid polypeptide reads, in one-letter code: Dual O-methyltransferase/FAD-dependent monooxygenase CTB3 (871 aa).

Residues 1-429 are O-methyltransferase; that stretch reads MMQFQRDLEA…GLLTVRSAGQ (429 aa). Position 279 (aspartate 279) interacts with S-adenosyl-L-methionine. The Proton acceptor role is filled by histidine 331. The interval 430-871 is FAD-dependent monooxygenase; the sequence is TALSGTNTLT…NLVDCSEFVF (442 aa). FAD contacts are provided by glutamate 485, arginine 569, aspartate 793, and alanine 806.

This sequence in the C-terminal section; belongs to the paxM FAD-dependent monooxygenase family. In the N-terminal section; belongs to the class I-like SAM-binding methyltransferase superfamily. Cation-independent O-methyltransferase family. COMT subfamily.

It carries out the reaction nor-toralactone + S-adenosyl-L-methionine = toralactone + S-adenosyl-L-homocysteine + H(+). The enzyme catalyses toralactone + NADH + O2 + H(+) = 1-(3,4,5-trihydroxy-7-methoxynaphthalen-2-yl)propan-2-one + CO2 + NAD(+). It functions in the pathway mycotoxin biosynthesis. In terms of biological role, dual O-methyltransferase/FAD-dependent monooxygenase; part of the gene cluster that mediates the biosynthesis of cercosporin, a light-activated, non-host-selective toxin. The perylenequinone chromophore of cercosporin absorbs light energy to attain an electronically-activated triplet state and produces active oxygen species such as the hydroxyl radical, superoxide, hydrogen peroxide or singlet oxygen upon reaction with oxygen molecules. These reactive oxygen species cause damage to various cellular components including lipids, proteins and nucleic acids. The first step of cercosporin biosynthesis is performed by the polyketide synthase CTB1 which catalyzes the formation of nor-toralactone. The starter unit acyltransferase (SAT) domain of CTB1 initiates polyketide extension by the selective utilization of acetyl-CoA, which is elongated to the heptaketide in the beta-ketoacyl synthase (KS) domain by successive condensations with six malonyl units introduced by the malonyl acyltransferase (MAT) domain. The product template (PT) domain catalyzes C4-C9 and C2-C11 aldol cyclizations and dehydrations to a trihydroxynaphthalene, which is thought to be delivered to the thioesterase (TE) domain for product release. The bifunctional enzyme CTB3 then methylates nor-toralactone to toralactone before conducting an unusual oxidative aromatic ring opening. The O-methyltransferase CTB2 further methylates the nascent OH-6 of the CBT3 product, blocking further oxidation at this site before the reductase CTB6 reduces the 2-oxopropyl ketone at position C7, giving naphthalene. The FAD-dependent monooxygenase CTB5 in concert with the multicopper oxidase CTB12 are responsible for homodimerization of naphthalene with CTB7 installing the dioxepine moiety, finally producing cercosporin. The fasciclin domain-containing protein CTB11 might act with CTB5 and CTB12 whereas the roles of CTB9 and CTB10 have still to be elucidated. This chain is Dual O-methyltransferase/FAD-dependent monooxygenase CTB3, found in Cercospora beticola (Sugarbeet leaf spot fungus).